The sequence spans 233 residues: Adenylyl cyclase-associated protein 1 (233 aa).

Phosphotyrosine is present on Y14. At S17 the chain carries Phosphoserine. Disordered stretches follow at residues 43–71 (VDKXGPVAKELSGLPSGPSAGSGPPPSAL) and 91–129 (DEKTHKNPADKAQSGPVRXGPKPFSASKPGISPSPKPVT). A compositionally biased stretch (low complexity) spans 53 to 64 (LSGLPSGPSAGS). K101 is modified (N6-methyllysine). Phosphoserine is present on residues S104, S115, S122, and S124. A Glycyl lysine isopeptide (Lys-Gly) (interchain with G-Cter in SUMO1) cross-link involves residue K151. The C-CAP/cofactor C-like domain occupies 173-221 (VPXISINKXDGRHIYLSKNSLDCEIVSAKSSEMNVLIPTEGGDFNEFPV).

This sequence belongs to the CAP family. In terms of assembly, homodimer. Binds actin monomers.

It localises to the cell membrane. Directly regulates filament dynamics and has been implicated in a number of complex developmental and morphological processes, including mRNA localization and the establishment of cell polarity. This is Adenylyl cyclase-associated protein 1 (CAP1) from Sus scrofa (Pig).